A 285-amino-acid polypeptide reads, in one-letter code: Pantothenate synthetase (285 aa).

30–37 (MGNLHAGH) serves as a coordination point for ATP. His-37 (proton donor) is an active-site residue. Residue Gln-61 coordinates (R)-pantoate. Gln-61 contributes to the beta-alanine binding site. ATP is bound at residue 149-152 (GEKD). Residue Gln-155 participates in (R)-pantoate binding. An ATP-binding site is contributed by 186–189 (LSSR).

This sequence belongs to the pantothenate synthetase family. In terms of assembly, homodimer.

It is found in the cytoplasm. The catalysed reaction is (R)-pantoate + beta-alanine + ATP = (R)-pantothenate + AMP + diphosphate + H(+). Its pathway is cofactor biosynthesis; (R)-pantothenate biosynthesis; (R)-pantothenate from (R)-pantoate and beta-alanine: step 1/1. Catalyzes the condensation of pantoate with beta-alanine in an ATP-dependent reaction via a pantoyl-adenylate intermediate. This Ectopseudomonas mendocina (strain ymp) (Pseudomonas mendocina) protein is Pantothenate synthetase.